The sequence spans 251 residues: Pyrroloquinoline-quinone synthase (251 aa).

Belongs to the PqqC family.

It carries out the reaction 6-(2-amino-2-carboxyethyl)-7,8-dioxo-1,2,3,4,7,8-hexahydroquinoline-2,4-dicarboxylate + 3 O2 = pyrroloquinoline quinone + 2 H2O2 + 2 H2O + H(+). It functions in the pathway cofactor biosynthesis; pyrroloquinoline quinone biosynthesis. In terms of biological role, ring cyclization and eight-electron oxidation of 3a-(2-amino-2-carboxyethyl)-4,5-dioxo-4,5,6,7,8,9-hexahydroquinoline-7,9-dicarboxylic-acid to PQQ. This chain is Pyrroloquinoline-quinone synthase, found in Cronobacter sakazakii (strain ATCC BAA-894) (Enterobacter sakazakii).